Consider the following 390-residue polypeptide: GTPase Obg (390 aa).

The 159-residue stretch at Met-1–Leu-159 folds into the Obg domain. The segment at Asn-127–Gly-147 is disordered. Residues Arg-129–Thr-145 show a composition bias toward polar residues. An OBG-type G domain is found at Ala-160 to Ile-333. GTP is bound by residues Gly-166–Ser-173, Phe-191–Val-195, Asp-213–Gly-216, Asn-283–Asp-286, and Ser-314–Ala-316. Residues Ser-173 and Thr-193 each coordinate Mg(2+).

Belongs to the TRAFAC class OBG-HflX-like GTPase superfamily. OBG GTPase family. As to quaternary structure, monomer. The cofactor is Mg(2+).

Its subcellular location is the cytoplasm. In terms of biological role, an essential GTPase which binds GTP, GDP and possibly (p)ppGpp with moderate affinity, with high nucleotide exchange rates and a fairly low GTP hydrolysis rate. Plays a role in control of the cell cycle, stress response, ribosome biogenesis and in those bacteria that undergo differentiation, in morphogenesis control. The sequence is that of GTPase Obg from Escherichia coli O7:K1 (strain IAI39 / ExPEC).